Reading from the N-terminus, the 507-residue chain is Cytochrome P450 3A28 (507 aa).

Cysteine 442 is a heme binding site.

It belongs to the cytochrome P450 family. The cofactor is heme.

It is found in the endoplasmic reticulum membrane. It localises to the microsome membrane. It catalyses the reaction an organic molecule + reduced [NADPH--hemoprotein reductase] + O2 = an alcohol + oxidized [NADPH--hemoprotein reductase] + H2O + H(+). Cytochromes P450 are a group of heme-thiolate monooxygenases. In liver microsomes, this enzyme is involved in an NADPH-dependent electron transport pathway. It oxidizes a variety of structurally unrelated compounds, including steroids, fatty acids, and xenobiotics. This is Cytochrome P450 3A28 (CYP3A28) from Bos taurus (Bovine).